A 563-amino-acid chain; its full sequence is Arginine--tRNA ligase (563 aa).

Residues 121 to 131 carry the 'HIGH' region motif; that stretch reads PNIAKPFSIGH.

It belongs to the class-I aminoacyl-tRNA synthetase family. In terms of assembly, monomer.

It localises to the cytoplasm. The catalysed reaction is tRNA(Arg) + L-arginine + ATP = L-arginyl-tRNA(Arg) + AMP + diphosphate. In Streptococcus agalactiae serotype Ia (strain ATCC 27591 / A909 / CDC SS700), this protein is Arginine--tRNA ligase.